The primary structure comprises 454 residues: Bifunctional protein GlmU (454 aa).

Residues methionine 1–arginine 226 form a pyrophosphorylase region. UDP-N-acetyl-alpha-D-glucosamine-binding positions include leucine 8–glycine 11, lysine 22, glutamine 73, glycine 78–threonine 79, tyrosine 99–aspartate 101, glycine 136, glutamate 151, asparagine 166, and asparagine 224. Mg(2+) is bound at residue aspartate 101. Asparagine 224 lines the Mg(2+) pocket. The interval leucine 227–glutamine 247 is linker. Positions glycine 248–lysine 454 are N-acetyltransferase. UDP-N-acetyl-alpha-D-glucosamine-binding residues include arginine 330 and lysine 348. Histidine 360 (proton acceptor) is an active-site residue. Residues tyrosine 363 and asparagine 374 each contribute to the UDP-N-acetyl-alpha-D-glucosamine site. Acetyl-CoA contacts are provided by residues alanine 377, asparagine 383–tyrosine 384, serine 402, alanine 420, and arginine 437.

It in the N-terminal section; belongs to the N-acetylglucosamine-1-phosphate uridyltransferase family. The protein in the C-terminal section; belongs to the transferase hexapeptide repeat family. As to quaternary structure, homotrimer. Requires Mg(2+) as cofactor.

It localises to the cytoplasm. It carries out the reaction alpha-D-glucosamine 1-phosphate + acetyl-CoA = N-acetyl-alpha-D-glucosamine 1-phosphate + CoA + H(+). The enzyme catalyses N-acetyl-alpha-D-glucosamine 1-phosphate + UTP + H(+) = UDP-N-acetyl-alpha-D-glucosamine + diphosphate. The protein operates within nucleotide-sugar biosynthesis; UDP-N-acetyl-alpha-D-glucosamine biosynthesis; N-acetyl-alpha-D-glucosamine 1-phosphate from alpha-D-glucosamine 6-phosphate (route II): step 2/2. It participates in nucleotide-sugar biosynthesis; UDP-N-acetyl-alpha-D-glucosamine biosynthesis; UDP-N-acetyl-alpha-D-glucosamine from N-acetyl-alpha-D-glucosamine 1-phosphate: step 1/1. It functions in the pathway bacterial outer membrane biogenesis; LPS lipid A biosynthesis. Its function is as follows. Catalyzes the last two sequential reactions in the de novo biosynthetic pathway for UDP-N-acetylglucosamine (UDP-GlcNAc). The C-terminal domain catalyzes the transfer of acetyl group from acetyl coenzyme A to glucosamine-1-phosphate (GlcN-1-P) to produce N-acetylglucosamine-1-phosphate (GlcNAc-1-P), which is converted into UDP-GlcNAc by the transfer of uridine 5-monophosphate (from uridine 5-triphosphate), a reaction catalyzed by the N-terminal domain. The polypeptide is Bifunctional protein GlmU (Azotobacter vinelandii (strain DJ / ATCC BAA-1303)).